An 832-amino-acid polypeptide reads, in one-letter code: Protein PPP4R3C (832 aa).

A disordered region spans residues 708–832; that stretch reads RTQEGEAVMP…SPKKKPHLSS (125 aa). Basic and acidic residues-rich tracts occupy residues 725–735 and 749–765; these read FTETKRTHQEG and METK…DSPK. Residues 769-779 show a composition bias toward low complexity; it reads SGDFKFSSSYS. Positions 801 to 820 are enriched in acidic residues; the sequence is PDDEEEKEEDEEEKEEDKED.

Belongs to the SMEK family.

The sequence is that of Protein PPP4R3C from Homo sapiens (Human).